A 134-amino-acid chain; its full sequence is Small ribosomal subunit protein uS8c (134 aa).

It belongs to the universal ribosomal protein uS8 family. In terms of assembly, part of the 30S ribosomal subunit.

The protein localises to the plastid. Its subcellular location is the chloroplast. One of the primary rRNA binding proteins, it binds directly to 16S rRNA central domain where it helps coordinate assembly of the platform of the 30S subunit. In Panax ginseng (Korean ginseng), this protein is Small ribosomal subunit protein uS8c (rps8).